Consider the following 372-residue polypeptide: AA9 family lytic polysaccharide monooxygenase C (372 aa).

Positions 1–16 (MFRSALFLLLAPLALS) are cleaved as a signal peptide. Cu(2+) is bound by residues histidine 17 and histidine 99. Cysteine 59 and cysteine 189 are disulfide-bonded. 2 residues coordinate O2: histidine 174 and glutamine 184. Tyrosine 186 provides a ligand contact to Cu(2+).

This sequence belongs to the polysaccharide monooxygenase AA9 family. It depends on Cu(2+) as a cofactor.

It localises to the secreted. The catalysed reaction is [(1-&gt;4)-beta-D-glucosyl]n+m + reduced acceptor + O2 = 4-dehydro-beta-D-glucosyl-[(1-&gt;4)-beta-D-glucosyl]n-1 + [(1-&gt;4)-beta-D-glucosyl]m + acceptor + H2O.. In terms of biological role, lytic polysaccharide monooxygenase (LPMO) that depolymerizes crystalline and amorphous polysaccharides via the oxidation of scissile alpha- or beta-(1-4)-glycosidic bonds, yielding C1 or C4 oxidation products. Catalysis by LPMOs requires the reduction of the active-site copper from Cu(II) to Cu(I) by a reducing agent and H(2)O(2) or O(2) as a cosubstrate. This chain is AA9 family lytic polysaccharide monooxygenase C, found in Aspergillus tamarii.